We begin with the raw amino-acid sequence, 361 residues long: UDP-N-acetylglucosamine--N-acetylmuramyl-(pentapeptide) pyrophosphoryl-undecaprenol N-acetylglucosamine transferase (361 aa).

Ser-199 and Gln-290 together coordinate UDP-N-acetyl-alpha-D-glucosamine.

It belongs to the glycosyltransferase 28 family. MurG subfamily.

It is found in the cell membrane. It catalyses the reaction Mur2Ac(oyl-L-Ala-gamma-D-Glu-L-Lys-D-Ala-D-Ala)-di-trans,octa-cis-undecaprenyl diphosphate + UDP-N-acetyl-alpha-D-glucosamine = beta-D-GlcNAc-(1-&gt;4)-Mur2Ac(oyl-L-Ala-gamma-D-Glu-L-Lys-D-Ala-D-Ala)-di-trans,octa-cis-undecaprenyl diphosphate + UDP + H(+). It functions in the pathway cell wall biogenesis; peptidoglycan biosynthesis. Functionally, cell wall formation. Catalyzes the transfer of a GlcNAc subunit on undecaprenyl-pyrophosphoryl-MurNAc-pentapeptide (lipid intermediate I) to form undecaprenyl-pyrophosphoryl-MurNAc-(pentapeptide)GlcNAc (lipid intermediate II). This is UDP-N-acetylglucosamine--N-acetylmuramyl-(pentapeptide) pyrophosphoryl-undecaprenol N-acetylglucosamine transferase from Streptococcus mutans serotype c (strain ATCC 700610 / UA159).